The sequence spans 695 residues: MASNLTFEDKIGILDPKGLRPNPLNNEPYSDDYKKLAMVWSTYPAYSAADRVLSALENYQLVFVTSSTGSGKSVLIPKLALHYTNYNGRVVMTLPKRIITLSAAIFSAKVSDVKLGESIGYAYKGSDKSMYNDQNKIIYVTDGIFVMEYVRDPLLSKFNVVIIDEAHERRIQIDLILLFLRTLLQSGNRPDLKVIIMSATIDTDKYQKYFNSVDSTVIDIAGQPNHPIETHFMDKPVTSYMKEGLELIEDLIHQQIKKDMLFFITTSNEALQLCRSIRPQYPRVYCVEVYSDMDKNLKQYAESRDKYLELGNYDQKLVMATNVAESSLTIDGLVYVIDSGYELSSRFDPECYGQILEKKFVSKAQALQRRGRVGRTEPGVCYHLLTKQQFDGLADYPTPDILRQDITMDLIKIIQVSPNKTYAEGINMMNQLMDPPLRSHINATRNLFDLYNVVDDNGILTQVGIVATQFSSLPLNRILFLIYAFELQCAREASIIVAMTEFLNGRVTNLFYKSDTICESNCEKQAANLLLEKLIQKRGDHFTYLKIYQEFSKSTDQKSWARKYGVRLDTINNIERTANQYFYRILNLLRKPRLPNNKNTLIDTSIDTPMDIQSRISSTDTKTNLLNALKKSHQHLTASKLKPTYSKENITGKISRDSVLNQIYKKNEISKKKIIYDELSNINGKWEFRTVTIIS.

The Helicase ATP-binding domain maps to 53-219 (LSALENYQLV…FNSVDSTVID (167 aa)). 66–73 (SSTGSGKS) is an ATP binding site. The short motif at 164–167 (DEAH) is the DEAH box element. Residues 247–434 (LIEDLIHQQI…GINMMNQLMD (188 aa)) form the Helicase C-terminal domain.

It belongs to the DEAD box helicase family. DEAH subfamily.

The protein localises to the virion. The enzyme catalyses ATP + H2O = ADP + phosphate + H(+). The chain is Putative ATP-dependent RNA helicase L540 from Acanthamoeba polyphaga (Amoeba).